Reading from the N-terminus, the 308-residue chain is Phenylcoumaran benzylic ether reductase 1 (308 aa).

NADP(+) contacts are provided by residues 11–17 (GGTGYIG), Arg36, and Arg45. Residue Lys133 is the Proton acceptor of the active site. Residue Arg137 coordinates NADP(+).

This sequence belongs to the NmrA-type oxidoreductase family. Isoflavone reductase subfamily. Expressed in apical meristem and cotyledon veins of young seedlings. Expressed in vascular tissues of roots, leaves, stems and petals. Expressed in pollen grains. Expressed at low levels in cauline leaves and siliques.

It catalyses the reaction (-)-dehydrodiconiferyl alcohol + NADPH + H(+) = (S)-isodihydrodehydrodiconiferyl alcohol + NADP(+). The catalysed reaction is (+)-dehydrodiconiferyl alcohol + NADPH + H(+) = (R)-isodihydrodehydrodiconiferyl alcohol + NADP(+). The enzyme catalyses (2R,3S)-dihydrodehydrodiconiferyl alcohol + NADPH + H(+) = (S)-tetrahydrodehydrodiconiferyl alcohol + NADP(+). It carries out the reaction (2S,3R)-dihydrodehydrodiconiferyl alcohol + NADPH + H(+) = (R)-tetrahydrodehydrodiconiferyl alcohol + NADP(+). In terms of biological role, oxidoreductase involved in lignan biosynthesis. Catalyzes the NADPH-dependent reduction of phenylcoumaran benzylic ethers. Converts dehydrodiconiferyl alcohol (DDC) to isodihydrodehydrodiconiferyl alcohol (IDDDC), and dihydrodehydrodiconiferyl alcohol (DDDC) to tetrahydrodehydrodiconiferyl alcohol (TDDC). Plays an important role in the biosynthesis of secondary metabolites. In addition to the 8-5'-linked neolignan DDC, can reduce the 8-8'-linked lignans, pinoresinol, and lariciresinol, but with lower activities. The chain is Phenylcoumaran benzylic ether reductase 1 from Arabidopsis thaliana (Mouse-ear cress).